The chain runs to 304 residues: Glutamyl-Q tRNA(Asp) synthetase (304 aa).

Residues 14–18 (RFAPS) and Glu-50 contribute to the L-glutamate site. The 'HIGH' region motif lies at 17 to 27 (PSPSGPLHFGS). Zn(2+) is bound by residues Cys-106, Cys-108, Tyr-120, and Cys-124. Positions 178 and 196 each coordinate L-glutamate. The 'KMSKS' region motif lies at 234 to 238 (KLSKQ). Position 237 (Lys-237) interacts with ATP.

The protein belongs to the class-I aminoacyl-tRNA synthetase family. GluQ subfamily. Requires Zn(2+) as cofactor.

Its function is as follows. Catalyzes the tRNA-independent activation of glutamate in presence of ATP and the subsequent transfer of glutamate onto a tRNA(Asp). Glutamate is transferred on the 2-amino-5-(4,5-dihydroxy-2-cyclopenten-1-yl) moiety of the queuosine in the wobble position of the QUC anticodon. This Vibrio cholerae serotype O1 (strain ATCC 39315 / El Tor Inaba N16961) protein is Glutamyl-Q tRNA(Asp) synthetase.